Reading from the N-terminus, the 267-residue chain is NAD-capped RNA hydrolase NudC (267 aa).

Position 70 (Arg-70) interacts with substrate. 2 residues coordinate Zn(2+): Cys-99 and Cys-102. Residue Glu-112 coordinates substrate. Cys-117 and Cys-122 together coordinate Zn(2+). Tyr-127 provides a ligand contact to substrate. The region spanning 128 to 257 is the Nudix hydrolase domain; that stretch reads PVICPSIIVA…TIARALIEAT (130 aa). Residues Ala-166, Glu-182, and Glu-186 each contribute to the a divalent metal cation site. A Nudix box motif is present at residues 167-188; the sequence is GFVEVGESFEQTIHREVFEETG. 200–207 provides a ligand contact to substrate; that stretch reads QPWAFPNS. Glu-227 is a binding site for a divalent metal cation. Ala-250 is a binding site for substrate.

The protein belongs to the Nudix hydrolase family. NudC subfamily. In terms of assembly, homodimer. It depends on Mg(2+) as a cofactor. Mn(2+) is required as a cofactor. Zn(2+) serves as cofactor.

The enzyme catalyses a 5'-end NAD(+)-phospho-ribonucleoside in mRNA + H2O = a 5'-end phospho-adenosine-phospho-ribonucleoside in mRNA + beta-nicotinamide D-ribonucleotide + 2 H(+). The catalysed reaction is NAD(+) + H2O = beta-nicotinamide D-ribonucleotide + AMP + 2 H(+). It carries out the reaction NADH + H2O = reduced beta-nicotinamide D-ribonucleotide + AMP + 2 H(+). MRNA decapping enzyme that specifically removes the nicotinamide adenine dinucleotide (NAD) cap from a subset of mRNAs by hydrolyzing the diphosphate linkage to produce nicotinamide mononucleotide (NMN) and 5' monophosphate mRNA. The NAD-cap is present at the 5'-end of some mRNAs and stabilizes RNA against 5'-processing. Has preference for mRNAs with a 5'-end purine. Catalyzes the hydrolysis of a broad range of dinucleotide pyrophosphates. This chain is NAD-capped RNA hydrolase NudC, found in Mannheimia succiniciproducens (strain KCTC 0769BP / MBEL55E).